Consider the following 188-residue polypeptide: Ribonuclease HII (188 aa).

The RNase H type-2 domain maps to 6–188 (KPLCGIDEAG…VKGLDEPTLF (183 aa)). Aspartate 12, glutamate 13, and aspartate 99 together coordinate a divalent metal cation.

This sequence belongs to the RNase HII family. Mn(2+) is required as a cofactor. Mg(2+) serves as cofactor.

The protein localises to the cytoplasm. It catalyses the reaction Endonucleolytic cleavage to 5'-phosphomonoester.. Functionally, endonuclease that specifically degrades the RNA of RNA-DNA hybrids. In Sulfurovum sp. (strain NBC37-1), this protein is Ribonuclease HII.